Reading from the N-terminus, the 382-residue chain is Alkanesulfonate monooxygenase (382 aa).

The protein belongs to the SsuD family. As to quaternary structure, homotetramer.

It carries out the reaction an alkanesulfonate + FMNH2 + O2 = an aldehyde + FMN + sulfite + H2O + 2 H(+). Catalyzes the desulfonation of aliphatic sulfonates. The sequence is that of Alkanesulfonate monooxygenase from Buttiauxella sp. (strain PNBS).